Reading from the N-terminus, the 450-residue chain is Aspartyl/glutamyl-tRNA(Asn/Gln) amidotransferase subunit B (450 aa).

It belongs to the GatB/GatE family. GatB subfamily. In terms of assembly, heterotrimer of A, B and C subunits.

It catalyses the reaction L-glutamyl-tRNA(Gln) + L-glutamine + ATP + H2O = L-glutaminyl-tRNA(Gln) + L-glutamate + ADP + phosphate + H(+). The catalysed reaction is L-aspartyl-tRNA(Asn) + L-glutamine + ATP + H2O = L-asparaginyl-tRNA(Asn) + L-glutamate + ADP + phosphate + 2 H(+). Functionally, allows the formation of correctly charged Asn-tRNA(Asn) or Gln-tRNA(Gln) through the transamidation of misacylated Asp-tRNA(Asn) or Glu-tRNA(Gln) in organisms which lack either or both of asparaginyl-tRNA or glutaminyl-tRNA synthetases. The reaction takes place in the presence of glutamine and ATP through an activated phospho-Asp-tRNA(Asn) or phospho-Glu-tRNA(Gln). This is Aspartyl/glutamyl-tRNA(Asn/Gln) amidotransferase subunit B from Methanobrevibacter smithii (strain ATCC 35061 / DSM 861 / OCM 144 / PS).